A 792-amino-acid polypeptide reads, in one-letter code: Starch synthase 2, chloroplastic/amyloplastic (792 aa).

Residues 1 to 55 (MASVAESSFPLLCQIKTQRRINSSTLRHSRVSYHDLPSGSLSFRSRSFVLGHRCK) constitute a chloroplast transit peptide. A disordered region spans residues 105 to 295 (IKESTPDLDD…GKDEEKPPPL (191 aa)). Residues 145–156 (GSVSPSTYGKSS) show a composition bias toward polar residues. A compositionally biased stretch (low complexity) spans 179-192 (SSASVISSSPVTSP). Residues 221–233 (SVMTSPEKTSDPV) show a composition bias toward polar residues. Residues 266–275 (KTEKYVEKTP) are compositionally biased toward basic and acidic residues. Position 315 (Lys-315) interacts with ADP-alpha-D-glucose.

Belongs to the glycosyltransferase 1 family. Bacterial/plant glycogen synthase subfamily. Expressed in roots, leaves and flowers.

It localises to the plastid. The protein resides in the chloroplast. Its subcellular location is the amyloplast. It carries out the reaction [(1-&gt;4)-alpha-D-glucosyl](n) + ADP-alpha-D-glucose = [(1-&gt;4)-alpha-D-glucosyl](n+1) + ADP + H(+). It functions in the pathway glycan biosynthesis; starch biosynthesis. Involved in the synthesis of glycan chains within amylopectin in leaves. Is required to produce chains with a degree of polymerization of 12 to 25 (DP12-DP25). The protein is Starch synthase 2, chloroplastic/amyloplastic (SS2) of Arabidopsis thaliana (Mouse-ear cress).